We begin with the raw amino-acid sequence, 338 residues long: tRNA N6-adenosine threonylcarbamoyltransferase (338 aa).

Fe cation contacts are provided by H111 and H115. Substrate-binding positions include 134 to 138, D167, G180, and N275; that span reads LLSGG. Fe cation is bound at residue D304.

This sequence belongs to the KAE1 / TsaD family. Requires Fe(2+) as cofactor.

It localises to the cytoplasm. The enzyme catalyses L-threonylcarbamoyladenylate + adenosine(37) in tRNA = N(6)-L-threonylcarbamoyladenosine(37) in tRNA + AMP + H(+). Functionally, required for the formation of a threonylcarbamoyl group on adenosine at position 37 (t(6)A37) in tRNAs that read codons beginning with adenine. Is involved in the transfer of the threonylcarbamoyl moiety of threonylcarbamoyl-AMP (TC-AMP) to the N6 group of A37, together with TsaE and TsaB. TsaD likely plays a direct catalytic role in this reaction. This is tRNA N6-adenosine threonylcarbamoyltransferase from Leptospira interrogans serogroup Icterohaemorrhagiae serovar copenhageni (strain Fiocruz L1-130).